Reading from the N-terminus, the 388-residue chain is 3-dehydroquinate synthase (388 aa).

This sequence belongs to the archaeal-type DHQ synthase family.

It carries out the reaction 2-amino-2,3,7-trideoxy-D-lyxo-hept-6-ulosonate + NAD(+) + H2O = 3-dehydroquinate + NH4(+) + NADH + H(+). Its function is as follows. Catalyzes the oxidative deamination and cyclization of 2-amino-3,7-dideoxy-D-threo-hept-6-ulosonic acid (ADH) to yield 3-dehydroquinate (DHQ), which is fed into the canonical shikimic pathway of aromatic amino acid biosynthesis. In Haloarcula marismortui (strain ATCC 43049 / DSM 3752 / JCM 8966 / VKM B-1809) (Halobacterium marismortui), this protein is 3-dehydroquinate synthase.